A 183-amino-acid polypeptide reads, in one-letter code: Hypoxanthine/guanine phosphoribosyltransferase (183 aa).

Belongs to the purine/pyrimidine phosphoribosyltransferase family. Archaeal HPRT subfamily. Homodimer.

The protein localises to the cytoplasm. The catalysed reaction is IMP + diphosphate = hypoxanthine + 5-phospho-alpha-D-ribose 1-diphosphate. The enzyme catalyses GMP + diphosphate = guanine + 5-phospho-alpha-D-ribose 1-diphosphate. Its pathway is purine metabolism; IMP biosynthesis via salvage pathway; IMP from hypoxanthine: step 1/1. Catalyzes a salvage reaction resulting in the formation of IMP that is energically less costly than de novo synthesis. The polypeptide is Hypoxanthine/guanine phosphoribosyltransferase (Methanocaldococcus jannaschii (strain ATCC 43067 / DSM 2661 / JAL-1 / JCM 10045 / NBRC 100440) (Methanococcus jannaschii)).